The following is a 94-amino-acid chain: Putative RNA-binding protein RbpD (94 aa).

The RRM domain maps to 2-79 (TIYVGNLSYR…RQLRVNKAKP (78 aa)). The tract at residues 73–94 (RVNKAKPREDDRRGSWGKKQDY) is disordered. A compositionally biased stretch (basic and acidic residues) spans 78–94 (KPREDDRRGSWGKKQDY).

The protein is Putative RNA-binding protein RbpD (rbpD) of Nostoc sp. (strain PCC 7120 / SAG 25.82 / UTEX 2576).